The sequence spans 297 residues: HTH-type transcriptional regulator ArgP (297 aa).

The HTH lysR-type domain maps to 4 to 60; that stretch reads PDYRTLQALDAVIRERGFERAAQKLCITQSAVSQRIKQLENMFGQPLLVRTVPPRPT. The H-T-H motif DNA-binding region spans 21-40; the sequence is FERAAQKLCITQSAVSQRIK.

The protein belongs to the LysR transcriptional regulatory family. Homodimer.

Its function is as follows. Controls the transcription of genes involved in arginine and lysine metabolism. This Klebsiella pneumoniae (strain 342) protein is HTH-type transcriptional regulator ArgP.